The sequence spans 1056 residues: MAKKAIDSRIPSLIRNGVQTKQRSIFVIVGDRARNQLPNLHYLMMSADLKMNKSVLWAYKKKLLGFTSHRKKRENKIKKEIKRGTREVNEMDPFESFISNQNIRYVYYKESEKILGNTYGMCILQDFEALTPNLLARTIETVEGGGIVVILLKSMSSLKQLYTMTMDVHARYRTEAHGDVVARFNERFILSLGSNPNCLVVDDELNVLPLSGAKNVKPLPPKEDDELPPKQLELQELKESLEDVQPAGSLVSLSKTVNQAHAILSFIDAISEKTLNFTVALTAGRGRGKSAALGISIAAAVSHGYSNIFVTSPSPENLKTLFEFIFKGFDALGYQEHIDYDIIQSTNPDFNKAIVRVDIKRDHRQTIQYIVPQDHQVLGQAELVVIDEAAAIPLPIVKNLLGPYLVFMASTINGYEGTGRSLSLKLIQQLRNQNNTSGRESTQTAVVSRDNKEKDSHLHSQSRQLREISLDEPIRYAPGDPIEKWLNKLLCLDVTLIKNPRFATRGTPHPSQCNLFVVNRDTLFSYHPVSENFLEKMMALYVSSHYKNSPNDLQLMSDAPAHKLFVLLPPIDPKDGGRIPDPLCVIQIALEGEISKESVRNSLSRGQRAGGDLIPWLISQQFQDEEFASLSGARIVRIATNPEYASMGYGSRAIELLRDYFEGKFTDMSEDVRPKDYSIKRVSDKELAKTNLLKDDVKLRDAKTLPPLLLKLSEQPPHYLHYLGVSYGLTQSLHKFWKNNSFVPVYLRQTANDLTGEHTCVMLNVLEGRESNWLVEFAKDFRKRFLSLLSYDFHKFTAVQALSVIESSKKAQDLSDDEKHDNKELTRTHLDDIFSPFDLKRLDSYSNNLLDYHVIGDMIPMLALLYFGDKMGDSVKLSSVQSAILLAIGLQRKNIDTIAKELNLPSNQTIAMFAKIMRKMSQYFRQLLSQSIEETLPNIKDDAIAEMDGEEIKNYNAAEALDQMEEDLEEAGSEAVQAMREKQKELINSLNLDKYAINDNSEEWAESQKSLEIAAKAKGVVSLKTGKKRTTEKAEDIYRQEMKAMKKPRKSKKAAN.

G286 to I295 serves as a coordination point for ATP. Positions Q433–V446 are enriched in polar residues. Residues Q433–R463 are disordered. Residues R449–R463 show a composition bias toward basic and acidic residues. R475 provides a ligand contact to ATP. In terms of domain architecture, N-acetyltransferase spans V566–P706. Acetyl-CoA-binding positions include I638–T640, A645–S651, and N739. Phosphoserine is present on residues S1001, S1007, and S1010.

This sequence belongs to the RNA cytidine acetyltransferase family. NAT10 subfamily. As to quaternary structure, interacts with TAN1. Associates with 90S pre-ribosomal particles.

Its subcellular location is the nucleus. It localises to the nucleolus. It carries out the reaction a cytidine in 18S rRNA + acetyl-CoA + ATP + H2O = an N(4)-acetylcytidine in 18S rRNA + ADP + phosphate + CoA + H(+). The catalysed reaction is a cytidine in tRNA + acetyl-CoA + ATP + H2O = an N(4)-acetylcytidine in tRNA + ADP + phosphate + CoA + H(+). Functionally, RNA cytidine acetyltransferase with specificity toward both 18S rRNA and tRNAs. Catalyzes the formation of N(4)-acetylcytidine (ac4C) at positions 1280 and 1773 in 18S rRNA. Required for early nucleolar cleavages of precursor rRNA at sites A0, A1 and A2 during 18S rRNA synthesis. Catalyzes the formation of ac4C at position 12 in serine and leucine tRNAs. Requires the tRNA-binding adapter protein TAN1 for full tRNA acetyltransferase activity but not for 18S rRNA acetylation. The polypeptide is RNA cytidine acetyltransferase (Saccharomyces cerevisiae (strain ATCC 204508 / S288c) (Baker's yeast)).